The primary structure comprises 188 residues: Probable DNA-directed RNA polymerase subunit delta (188 aa).

The HTH HARE-type domain occupies Leu-14 to Trp-83. The disordered stretch occupies residues Glu-119–Glu-188.

The protein belongs to the RpoE family. RNAP is composed of a core of 2 alpha, a beta and a beta' subunits. The core is associated with a delta subunit and one of several sigma factors.

Functionally, participates in both the initiation and recycling phases of transcription. In the presence of the delta subunit, RNAP displays an increased specificity of transcription, a decreased affinity for nucleic acids, and an increased efficiency of RNA synthesis because of enhanced recycling. In Streptococcus equi subsp. zooepidemicus (strain H70), this protein is Probable DNA-directed RNA polymerase subunit delta.